The following is a 263-amino-acid chain: Indole-3-glycerol phosphate synthase (263 aa).

It belongs to the TrpC family.

It catalyses the reaction 1-(2-carboxyphenylamino)-1-deoxy-D-ribulose 5-phosphate + H(+) = (1S,2R)-1-C-(indol-3-yl)glycerol 3-phosphate + CO2 + H2O. It functions in the pathway amino-acid biosynthesis; L-tryptophan biosynthesis; L-tryptophan from chorismate: step 4/5. The polypeptide is Indole-3-glycerol phosphate synthase (Desulfosudis oleivorans (strain DSM 6200 / JCM 39069 / Hxd3) (Desulfococcus oleovorans)).